A 615-amino-acid polypeptide reads, in one-letter code: Alpha-terpinene synthase TPS33PK, chloroplastic (615 aa).

A chloroplast-targeting transit peptide spans 1 to 33 (MFCRLGVHQFSPLSLILNTTKLARASTLSSACY). Positions 334, 371, 375, 513, and 516 each coordinate (2E)-geranyl diphosphate. Residues V371 and L375 each contribute to the Mg(2+) site. The short motif at 371–375 (VYGTL) is the DDXXD motif element. 3 residues coordinate Mg(2+): S516, M520, and D524.

Belongs to the terpene synthase family. Tpsb subfamily. Requires Mg(2+) as cofactor. The cofactor is Mn(2+).

It is found in the plastid. The protein resides in the chloroplast. The enzyme catalyses (2E)-geranyl diphosphate = alpha-terpinene + diphosphate. It catalyses the reaction (2E)-geranyl diphosphate = gamma-terpinene + diphosphate. The protein operates within secondary metabolite biosynthesis; terpenoid biosynthesis. Involved in monoterpene (C10) olefins biosynthesis, constituants of cannabinoids and terpenoids-rich resins. Catalyzes mainly the conversion of (2E)-geranyl diphosphate to alpha-terpinene and gamma-terpinene. This Cannabis sativa (Hemp) protein is Alpha-terpinene synthase TPS33PK, chloroplastic.